Here is a 418-residue protein sequence, read N- to C-terminus: Serine--tRNA ligase (418 aa).

228–230 serves as a coordination point for L-serine; sequence TSE. ATP-binding positions include 258–260 and V274; that span reads RKE. Residue E281 coordinates L-serine. ATP is bound at residue 345–348; it reads EVVS. L-serine is bound at residue T381.

The protein belongs to the class-II aminoacyl-tRNA synthetase family. Type-1 seryl-tRNA synthetase subfamily. Homodimer. The tRNA molecule binds across the dimer.

The protein localises to the cytoplasm. It catalyses the reaction tRNA(Ser) + L-serine + ATP = L-seryl-tRNA(Ser) + AMP + diphosphate + H(+). The catalysed reaction is tRNA(Sec) + L-serine + ATP = L-seryl-tRNA(Sec) + AMP + diphosphate + H(+). It functions in the pathway aminoacyl-tRNA biosynthesis; selenocysteinyl-tRNA(Sec) biosynthesis; L-seryl-tRNA(Sec) from L-serine and tRNA(Sec): step 1/1. Its function is as follows. Catalyzes the attachment of serine to tRNA(Ser). Is also able to aminoacylate tRNA(Sec) with serine, to form the misacylated tRNA L-seryl-tRNA(Sec), which will be further converted into selenocysteinyl-tRNA(Sec). In Cenarchaeum symbiosum (strain A), this protein is Serine--tRNA ligase.